A 368-amino-acid chain; its full sequence is Spermidine/putrescine import ATP-binding protein PotA (368 aa).

The ABC transporter domain occupies 8–238 (IELKNVSKIF…PVNLFVARFV (231 aa)). 40-47 (GPSGCGKT) contacts ATP.

It belongs to the ABC transporter superfamily. Spermidine/putrescine importer (TC 3.A.1.11.1) family. As to quaternary structure, the complex is composed of two ATP-binding proteins (PotA), two transmembrane proteins (PotB and PotC) and a solute-binding protein (PotD).

The protein localises to the cell membrane. It catalyses the reaction ATP + H2O + polyamine-[polyamine-binding protein]Side 1 = ADP + phosphate + polyamineSide 2 + [polyamine-binding protein]Side 1.. Its function is as follows. Part of the ABC transporter complex PotABCD involved in spermidine/putrescine import. Responsible for energy coupling to the transport system. This is Spermidine/putrescine import ATP-binding protein PotA from Lawsonia intracellularis (strain PHE/MN1-00).